The sequence spans 84 residues: Putative antitoxin VapB37 (84 aa).

Its function is as follows. Probable antitoxin component of a type II toxin-antitoxin (TA) system. Its putative cognate toxin is VapC37. The protein is Putative antitoxin VapB37 (vapB37) of Mycobacterium tuberculosis (strain CDC 1551 / Oshkosh).